The sequence spans 415 residues: Serine hydroxymethyltransferase 1 (415 aa).

Residues L122 and 126-128 each bind (6S)-5,6,7,8-tetrahydrofolate; that span reads GHL. K230 carries the N6-(pyridoxal phosphate)lysine modification.

Belongs to the SHMT family. Homodimer. It depends on pyridoxal 5'-phosphate as a cofactor.

The protein resides in the cytoplasm. It carries out the reaction (6R)-5,10-methylene-5,6,7,8-tetrahydrofolate + glycine + H2O = (6S)-5,6,7,8-tetrahydrofolate + L-serine. The protein operates within one-carbon metabolism; tetrahydrofolate interconversion. It participates in amino-acid biosynthesis; glycine biosynthesis; glycine from L-serine: step 1/1. Functionally, catalyzes the reversible interconversion of serine and glycine with tetrahydrofolate (THF) serving as the one-carbon carrier. This reaction serves as the major source of one-carbon groups required for the biosynthesis of purines, thymidylate, methionine, and other important biomolecules. Also exhibits THF-independent aldolase activity toward beta-hydroxyamino acids, producing glycine and aldehydes, via a retro-aldol mechanism. This chain is Serine hydroxymethyltransferase 1, found in Burkholderia thailandensis (strain ATCC 700388 / DSM 13276 / CCUG 48851 / CIP 106301 / E264).